We begin with the raw amino-acid sequence, 179 residues long: Large ribosomal subunit protein uL5 (179 aa).

It belongs to the universal ribosomal protein uL5 family. In terms of assembly, part of the 50S ribosomal subunit; part of the 5S rRNA/L5/L18/L25 subcomplex. Contacts the 5S rRNA and the P site tRNA. Forms a bridge to the 30S subunit in the 70S ribosome.

In terms of biological role, this is one of the proteins that bind and probably mediate the attachment of the 5S RNA into the large ribosomal subunit, where it forms part of the central protuberance. In the 70S ribosome it contacts protein S13 of the 30S subunit (bridge B1b), connecting the 2 subunits; this bridge is implicated in subunit movement. Contacts the P site tRNA; the 5S rRNA and some of its associated proteins might help stabilize positioning of ribosome-bound tRNAs. The sequence is that of Large ribosomal subunit protein uL5 from Ectopseudomonas mendocina (strain ymp) (Pseudomonas mendocina).